A 156-amino-acid chain; its full sequence is SsrA-binding protein (156 aa).

Belongs to the SmpB family.

Its subcellular location is the cytoplasm. Its function is as follows. Required for rescue of stalled ribosomes mediated by trans-translation. Binds to transfer-messenger RNA (tmRNA), required for stable association of tmRNA with ribosomes. tmRNA and SmpB together mimic tRNA shape, replacing the anticodon stem-loop with SmpB. tmRNA is encoded by the ssrA gene; the 2 termini fold to resemble tRNA(Ala) and it encodes a 'tag peptide', a short internal open reading frame. During trans-translation Ala-aminoacylated tmRNA acts like a tRNA, entering the A-site of stalled ribosomes, displacing the stalled mRNA. The ribosome then switches to translate the ORF on the tmRNA; the nascent peptide is terminated with the 'tag peptide' encoded by the tmRNA and targeted for degradation. The ribosome is freed to recommence translation, which seems to be the essential function of trans-translation. This chain is SsrA-binding protein, found in Renibacterium salmoninarum (strain ATCC 33209 / DSM 20767 / JCM 11484 / NBRC 15589 / NCIMB 2235).